The following is a 362-amino-acid chain: MLSQLNLRFHKKLIEALKTRAGRENTSVNALAERFLDDGLKTVAPGDGYFQLIADPEATVRQLYRHIILGQTFGTSALSRDELRFVLVHVREAFLRGHNRLATLPALDTLLDITGNLLAWQVEHDRPVDGHYLKGIFRLAGKNWTEEFEAFRAALRPVVDQMYAEHLLRPLESDCFGLAEVPDAVLAEIFTLPRLKAVFPLMLRGLDWNTEQARTLAQELRPVISAVTETIEAGTLRLEIRVDGQHPGERPGAWYTTPRLHLLITGQDFVVPYGWEALSELLGLFTLYARHPEALTHGHQGERVMFSPPGNVTPEGFFGIDGLRIFMPAEAFETLVRELATRCQEGPLAEALTGLRCLYGDL.

In terms of biological role, transcription repression of its own gene by binding to the PIF operator (pifO) and replication initiation from the primary origin (ori-1). Transcriptional repressor of the pifA and pifB. This Escherichia coli (strain K12) protein is Transcriptional repressor PifC (pifC).